Reading from the N-terminus, the 94-residue chain is Large ribosomal subunit protein uL23 (94 aa).

This sequence belongs to the universal ribosomal protein uL23 family. As to quaternary structure, part of the 50S ribosomal subunit. Contacts protein L29, and trigger factor when it is bound to the ribosome.

One of the early assembly proteins it binds 23S rRNA. One of the proteins that surrounds the polypeptide exit tunnel on the outside of the ribosome. Forms the main docking site for trigger factor binding to the ribosome. The sequence is that of Large ribosomal subunit protein uL23 from Roseiflexus castenholzii (strain DSM 13941 / HLO8).